The following is a 67-amino-acid chain: AKEGYLVNIYTGCKYSCWLLGENEYCIAECKEIGAGYGYCHGFGCWCEQFPENKPSYPYPEKSCGRK.

A1 is a signal peptide. An LCN-type CS-alpha/beta domain is found at 2 to 65 (KEGYLVNIYT…SYPYPEKSCG (64 aa)). Intrachain disulfides connect C13-C64, C17-C40, C26-C45, and C30-C47. Residue C64 is modified to Cysteine amide. The propeptide occupies 65-67 (GRK).

This sequence belongs to the long (4 C-C) scorpion toxin superfamily. Sodium channel inhibitor family. Beta subfamily. In terms of tissue distribution, expressed by the venom gland.

It localises to the secreted. Functionally, beta toxins bind voltage-independently at site-4 of sodium channels (Nav) and shift the voltage of activation toward more negative potentials thereby affecting sodium channel activation and promoting spontaneous and repetitive firing. This Centruroides exilicauda (Bark scorpion) protein is Toxin Cex8.